Reading from the N-terminus, the 536-residue chain is Phosphoenolpyruvate carboxykinase (ATP) (536 aa).

Substrate contacts are provided by Arg61, Tyr195, and Lys201. ATP is bound by residues Lys201, His220, and 236–244 (GLSGTGKTT). The Mn(2+) site is built by Lys201 and His220. Asp257 is a Mn(2+) binding site. ATP is bound by residues Glu285, Arg323, and Thr448. Arg323 contacts substrate.

Belongs to the phosphoenolpyruvate carboxykinase (ATP) family. Mn(2+) is required as a cofactor.

Its subcellular location is the cytoplasm. The catalysed reaction is oxaloacetate + ATP = phosphoenolpyruvate + ADP + CO2. It participates in carbohydrate biosynthesis; gluconeogenesis. In terms of biological role, involved in the gluconeogenesis. Catalyzes the conversion of oxaloacetate (OAA) to phosphoenolpyruvate (PEP) through direct phosphoryl transfer between the nucleoside triphosphate and OAA. The sequence is that of Phosphoenolpyruvate carboxykinase (ATP) from Methylobacterium sp. (strain 4-46).